Reading from the N-terminus, the 219-residue chain is Phosphatidylinositol phosphate synthase (219 aa).

29–32 (NQLT) is a binding site for a CDP-1,2-diacyl-sn-glycerol. 2 helical membrane passes run 31–47 (LTLV…LLLI) and 53–72 (IWAA…DGTV). Residues aspartate 66 and aspartate 69 each contribute to the Mg(2+) site. A CDP-1,2-diacyl-sn-glycerol-binding residues include glycine 70, arginine 74, and threonine 80. Mg(2+) is bound by residues aspartate 87 and aspartate 91. The active-site Proton acceptor is aspartate 91. Transmembrane regions (helical) follow at residues 93 to 110 (ITDG…VYSY), 116 to 133 (LVAA…ISYV), 154 to 171 (RLIV…GVPY), and 177 to 194 (LWAL…RLVM).

It belongs to the CDP-alcohol phosphatidyltransferase class-I family. In terms of assembly, homodimer. It depends on Mg(2+) as a cofactor.

Its subcellular location is the cell membrane. The enzyme catalyses a CDP-1,2-diacyl-sn-glycerol + 1D-myo-inositol 3-phosphate = a 1,2-diacyl-sn-glycero-3-phospho-(1D-myo-inositol-3-phosphate) + CMP + H(+). The catalysed reaction is 1,2-di-(9Z-octadecenoyl)-sn-glycero-3-cytidine-5'-diphosphate + 1D-myo-inositol 3-phosphate = 1,2-di-(9Z-octadecenoyl)-sn-glycero-3-phospho-(1D-myo-inositol-3-phosphate) + CMP + H(+). The protein operates within phospholipid metabolism; phosphatidylinositol phosphate biosynthesis. Functionally, catalyzes the conjugation of the 1'-hydroxyl group of D-myo-inositol-3-phosphate (also named L-myo-inositol-1-phosphate) with a lipid tail of cytidine diphosphate diacylglycerol (CDP-DAG), forming phosphatidylinositol phosphate (PIP) and CMP. PIP is a precursor of phosphatidylinositol (PI) which is an essential lipid required for cell wall formation. This is Phosphatidylinositol phosphate synthase from Corynebacterium glutamicum (strain ATCC 13032 / DSM 20300 / JCM 1318 / BCRC 11384 / CCUG 27702 / LMG 3730 / NBRC 12168 / NCIMB 10025 / NRRL B-2784 / 534).